A 437-amino-acid chain; its full sequence is Succinate--CoA ligase [ADP-forming] subunit beta, hydrogenosomal (437 aa).

The N-terminal 27 residues, 1–27 (MLANVTRSTSKAAPALASIAQTAQKRF), are a transit peptide targeting the hydrogenosome. The ATP-grasp domain occupies 36–278 (MNLLHEYNVN…TTQEDPREVA (243 aa)). ATP-binding positions include Lys73, 80 to 82 (GRG), and Glu141. Mg(2+) contacts are provided by Asn233 and Asp247. Substrate contacts are provided by residues Asn299 and 356–358 (GIM).

It belongs to the succinate/malate CoA ligase beta subunit family. Heterodimer of an alpha and a beta subunit. Mg(2+) serves as cofactor.

The protein resides in the hydrogenosome. It catalyses the reaction succinate + ATP + CoA = succinyl-CoA + ADP + phosphate. It functions in the pathway carbohydrate metabolism; tricarboxylic acid cycle; succinate from succinyl-CoA (ligase route): step 1/1. Its function is as follows. Succinyl-CoA synthetase functions in the citric acid cycle (TCA), coupling the hydrolysis of succinyl-CoA to the synthesis of ATP and thus represents the only step of substrate-level phosphorylation in the TCA. The beta subunit provides nucleotide specificity of the enzyme and binds the substrate succinate, while the binding sites for coenzyme A and phosphate are found in the alpha subunit. This is Succinate--CoA ligase [ADP-forming] subunit beta, hydrogenosomal from Neocallimastix frontalis (Rumen fungus).